The chain runs to 181 residues: MASAGSGMEEVRVSVLTPLKLVGLVCIFLALCLDLGAVLSPAWVTADHQYYLSLWESCRKPANLDIWHCESTLGSDWQIATLALLLGGAAIILIAFLVGLISICVGSRRRFYRPVAVMLFAAVVLQVCSLVLYPIKFIETVSLKIYHEFNWGYGLAWGATIFSFGGAILYCLNPKNYEDYY.

At alanine 2 the chain carries N-acetylalanine. The next 4 membrane-spanning stretches (helical) occupy residues leucine 21–proline 41, alanine 83–isoleucine 103, valine 115–isoleucine 135, and glycine 152–leucine 172.

It belongs to the TMEM47 family. Interacts with CTNNB1, CTNNA1, PRKCI, PARD6B. Interacts with FYB1. In terms of tissue distribution, expressed in podocytes (at protein level).

It localises to the membrane. The protein localises to the cell junction. Its subcellular location is the adherens junction. Its function is as follows. Regulates cell junction organization in epithelial cells. May play a role in the transition from adherens junction to tight junction assembly. May regulate F-actin polymerization required for tight junctional localization dynamics and affect the junctional localization of PARD6B. During podocyte differentiation may negatively regulate activity of FYN and subsequently the abundance of nephrin. In Mus musculus (Mouse), this protein is Transmembrane protein 47 (Tmem47).